Here is a 186-residue protein sequence, read N- to C-terminus: Peptidyl-tRNA hydrolase (186 aa).

Tyrosine 14 lines the tRNA pocket. Catalysis depends on histidine 19, which acts as the Proton acceptor. TRNA is bound by residues phenylalanine 64, asparagine 66, and asparagine 112.

It belongs to the PTH family. Monomer.

Its subcellular location is the cytoplasm. It carries out the reaction an N-acyl-L-alpha-aminoacyl-tRNA + H2O = an N-acyl-L-amino acid + a tRNA + H(+). In terms of biological role, hydrolyzes ribosome-free peptidyl-tRNAs (with 1 or more amino acids incorporated), which drop off the ribosome during protein synthesis, or as a result of ribosome stalling. Catalyzes the release of premature peptidyl moieties from peptidyl-tRNA molecules trapped in stalled 50S ribosomal subunits, and thus maintains levels of free tRNAs and 50S ribosomes. This Listeria monocytogenes serotype 4b (strain CLIP80459) protein is Peptidyl-tRNA hydrolase.